The sequence spans 434 residues: Nicotinate phosphoribosyltransferase (434 aa).

His242 carries the phosphohistidine; by autocatalysis modification.

It belongs to the NAPRTase family. Post-translationally, transiently phosphorylated on a His residue during the reaction cycle. Phosphorylation strongly increases the affinity for substrates and increases the rate of nicotinate D-ribonucleotide production. Dephosphorylation regenerates the low-affinity form of the enzyme, leading to product release.

It catalyses the reaction nicotinate + 5-phospho-alpha-D-ribose 1-diphosphate + ATP + H2O = nicotinate beta-D-ribonucleotide + ADP + phosphate + diphosphate. It participates in cofactor biosynthesis; NAD(+) biosynthesis; nicotinate D-ribonucleotide from nicotinate: step 1/1. In terms of biological role, catalyzes the synthesis of beta-nicotinate D-ribonucleotide from nicotinate and 5-phospho-D-ribose 1-phosphate at the expense of ATP. This is Nicotinate phosphoribosyltransferase from Chelativorans sp. (strain BNC1).